Consider the following 654-residue polypeptide: NADPH-dependent diflavin oxidoreductase 1 (654 aa).

Residues 1 to 10 show a composition bias toward low complexity; the sequence is MSGSQSSGSP. Residues 1–22 are disordered; sequence MSGSQSSGSPGSPGPPGPPGRS. Residues 23–167 form the Flavodoxin-like domain; that stretch reads ALVVYGSETG…TFIPWLAGFR (145 aa). Residues 29 to 34, 76 to 79, and 114 to 123 each bind FMN; these read SETGNA, STTG, and LGDSSYPKFN. An FAD-binding FR-type domain is found at 235 to 485; it reads HDSLTATLVQ…QLQRGGLNSS (251 aa). FAD contacts are provided by residues Arg-389, 419–422, and 458–461; these read RQFS and GVCT. NADP(+) contacts are provided by residues Thr-500, 568–569, and 574–578; these read SR and KVYVQ. Residue Trp-654 coordinates FAD.

It belongs to the NADPH-dependent diflavin oxidoreductase NDOR1 family. This sequence in the N-terminal section; belongs to the flavodoxin family. The protein in the C-terminal section; belongs to the flavoprotein pyridine nucleotide cytochrome reductase family. In terms of assembly, interacts with dre2; as part of the cytosolic iron-sulfur (Fe-S) protein assembly (CIA) machinery. FAD is required as a cofactor. FMN serves as cofactor.

It localises to the cytoplasm. The protein localises to the mitochondrion. The enzyme catalyses 2 oxidized [2Fe-2S]-[protein] + NADPH = 2 reduced [2Fe-2S]-[protein] + NADP(+) + H(+). Its function is as follows. NADPH-dependent reductase which is a central component of the cytosolic iron-sulfur (Fe-S) protein assembly (CIA) machinery. Transfers electrons from NADPH via its FAD and FMN prosthetic groups to the [2Fe-2S] cluster of dre2, another key component of the CIA machinery. In turn, this reduced cluster provides electrons for assembly of cytosolic iron-sulfur cluster proteins. Positively controls H(2)O(2)-induced cell death. The polypeptide is NADPH-dependent diflavin oxidoreductase 1 (Emericella nidulans (strain FGSC A4 / ATCC 38163 / CBS 112.46 / NRRL 194 / M139) (Aspergillus nidulans)).